Consider the following 171-residue polypeptide: Lipoprotein signal peptidase (171 aa).

3 helical membrane-spanning segments follow: residues Ser-8–Val-28, Trp-64–Leu-84, and Ser-96–Val-118. Catalysis depends on residues Asp-120 and Asp-138. The helical transmembrane segment at Val-133–Phe-153 threads the bilayer.

It belongs to the peptidase A8 family.

It is found in the cell inner membrane. The enzyme catalyses Release of signal peptides from bacterial membrane prolipoproteins. Hydrolyzes -Xaa-Yaa-Zaa-|-(S,diacylglyceryl)Cys-, in which Xaa is hydrophobic (preferably Leu), and Yaa (Ala or Ser) and Zaa (Gly or Ala) have small, neutral side chains.. It functions in the pathway protein modification; lipoprotein biosynthesis (signal peptide cleavage). This protein specifically catalyzes the removal of signal peptides from prolipoproteins. In Haemophilus influenzae (strain 86-028NP), this protein is Lipoprotein signal peptidase.